Here is a 756-residue protein sequence, read N- to C-terminus: 5-methyltetrahydropteroyltriglutamate--homocysteine methyltransferase (756 aa).

Residues 16–19 (RELK) and K116 contribute to the 5-methyltetrahydropteroyltri-L-glutamate site. L-homocysteine is bound by residues 433–435 (IGS) and E486. L-methionine contacts are provided by residues 433-435 (IGS) and E486. 5-methyltetrahydropteroyltri-L-glutamate-binding positions include 517–518 (RC) and W563. D601 lines the L-homocysteine pocket. D601 contributes to the L-methionine binding site. Residue E607 coordinates 5-methyltetrahydropteroyltri-L-glutamate. The Zn(2+) site is built by H643, C645, and E667. H696 serves as the catalytic Proton donor. Residue C728 coordinates Zn(2+).

The protein belongs to the vitamin-B12 independent methionine synthase family. Zn(2+) serves as cofactor.

The enzyme catalyses 5-methyltetrahydropteroyltri-L-glutamate + L-homocysteine = tetrahydropteroyltri-L-glutamate + L-methionine. It participates in amino-acid biosynthesis; L-methionine biosynthesis via de novo pathway; L-methionine from L-homocysteine (MetE route): step 1/1. Its function is as follows. Catalyzes the transfer of a methyl group from 5-methyltetrahydrofolate to homocysteine resulting in methionine formation. This is 5-methyltetrahydropteroyltriglutamate--homocysteine methyltransferase from Buchnera aphidicola subsp. Baizongia pistaciae (strain Bp).